We begin with the raw amino-acid sequence, 69 residues long: Cytochrome c oxidase subunit 8A, mitochondrial (69 aa).

Residues 1–25 (MSVLTPLLLRGLTGSARRLPVPRAK) constitute a mitochondrion transit peptide. The short motif at 2-19 (SVLTPLLLRGLTGSARRL) is the SIFI-degron element. Residues 26–36 (IHSLPPDEKLG) lie on the Mitochondrial matrix side of the membrane. The chain crosses the membrane as a helical span at residues 37-60 (IMELAVGLTSCFVTFLLPAGWILS). Topologically, residues 61–69 (HLETYRRPE) are mitochondrial intermembrane.

It belongs to the cytochrome c oxidase VIII family. In terms of assembly, component of the cytochrome c oxidase (complex IV, CIV), a multisubunit enzyme composed of 14 subunits. The complex is composed of a catalytic core of 3 subunits MT-CO1, MT-CO2 and MT-CO3, encoded in the mitochondrial DNA, and 11 supernumerary subunits COX4I, COX5A, COX5B, COX6A, COX6B, COX6C, COX7A, COX7B, COX7C, COX8 and NDUFA4, which are encoded in the nuclear genome. The complex exists as a monomer or a dimer and forms supercomplexes (SCs) in the inner mitochondrial membrane with NADH-ubiquinone oxidoreductase (complex I, CI) and ubiquinol-cytochrome c oxidoreductase (cytochrome b-c1 complex, complex III, CIII), resulting in different assemblies (supercomplex SCI(1)III(2)IV(1) and megacomplex MCI(2)III(2)IV(2)). In terms of processing, in response to mitochondrial stress, the precursor protein is ubiquitinated by the SIFI complex in the cytoplasm before mitochondrial import, leading to its degradation. Within the SIFI complex, UBR4 initiates ubiquitin chain that are further elongated or branched by KCMF1.

The protein localises to the mitochondrion inner membrane. It functions in the pathway energy metabolism; oxidative phosphorylation. Component of the cytochrome c oxidase, the last enzyme in the mitochondrial electron transport chain which drives oxidative phosphorylation. The respiratory chain contains 3 multisubunit complexes succinate dehydrogenase (complex II, CII), ubiquinol-cytochrome c oxidoreductase (cytochrome b-c1 complex, complex III, CIII) and cytochrome c oxidase (complex IV, CIV), that cooperate to transfer electrons derived from NADH and succinate to molecular oxygen, creating an electrochemical gradient over the inner membrane that drives transmembrane transport and the ATP synthase. Cytochrome c oxidase is the component of the respiratory chain that catalyzes the reduction of oxygen to water. Electrons originating from reduced cytochrome c in the intermembrane space (IMS) are transferred via the dinuclear copper A center (CU(A)) of subunit 2 and heme A of subunit 1 to the active site in subunit 1, a binuclear center (BNC) formed by heme A3 and copper B (CU(B)). The BNC reduces molecular oxygen to 2 water molecules using 4 electrons from cytochrome c in the IMS and 4 protons from the mitochondrial matrix. This Gorilla gorilla gorilla (Western lowland gorilla) protein is Cytochrome c oxidase subunit 8A, mitochondrial (COX8A).